We begin with the raw amino-acid sequence, 558 residues long: Kelch-like protein 23 (558 aa).

Residues 36 to 104 (TDITLQCPSG…AYTSQIEITK (69 aa)) form the BTB domain. Residues 139–240 (CIGMHSFAEF…DPVYLKTALG (102 aa)) form the BACK domain. 6 Kelch repeats span residues 274–320 (TMYI…CLGP), 321–369 (NIYV…TLGG), 370–416 (CVYA…VLHD), 418–466 (IYVI…PFEN), 467–508 (KLYL…IMNG), and 510–557 (IYVT…CVYN).

In Homo sapiens (Human), this protein is Kelch-like protein 23 (KLHL23).